The primary structure comprises 653 residues: Epithelial sodium channel subunit gamma (653 aa).

Residues 1–54 (MGHGRRISESIKKQLPVTGPEAPTVKNLMDWYLNNTNTHGCRRIAVSRGYLRRW) lie on the Cytoplasmic side of the membrane. A helical transmembrane segment spans residues 55–75 (IWICFTVSSVGMIFWQWTLLL). Over 76 to 546 (MSYYTVSVSV…GGQLGLWMSC (471 aa)) the chain is Extracellular. 8 disulfide bridges follow: cysteine 100/cysteine 290, cysteine 214/cysteine 221, cysteine 267/cysteine 274, cysteine 379/cysteine 464, cysteine 401/cysteine 460, cysteine 405/cysteine 456, cysteine 414/cysteine 441, and cysteine 416/cysteine 430. Residues 547 to 567 (SIVCFLEMWEVFLVDILTIIA) traverse the membrane as a helical segment. The Cytoplasmic portion of the chain corresponds to 568–653 (RYWLHRGRQW…DEQVSDTEVN (86 aa)). The disordered stretch occupies residues 582 to 608 (KERQMQQPSPPDHDTGHHNPVCIDDED).

The protein belongs to the amiloride-sensitive sodium channel (TC 1.A.6) family. SCNN1G subfamily. As to quaternary structure, component of the heterotrimeric epithelial sodium channel (ENaC) composed of an alpha/SCNN1A, a beta/SCNN1B and a gamma/SCNN1G subunit. Strongly expressed in gill, liver, kidney and rectum and more weakly in heart, muscle and intestine.

The protein localises to the apical cell membrane. It carries out the reaction Na(+)(in) = Na(+)(out). Originally identified and characterized by its inhibition by the diuretic drug amiloride. Its function is as follows. This is one of the three pore-forming subunits of the heterotrimeric epithelial sodium channel (ENaC), a critical regulator of sodium balance and fluid homeostasis. ENaC operates in epithelial tissues, where it mediates the electrodiffusion of sodium ions from extracellular fluid through the apical membrane of cells, with water following osmotically. The polypeptide is Epithelial sodium channel subunit gamma (Neoceratodus forsteri (Australian lungfish)).